Consider the following 318-residue polypeptide: Homoserine O-succinyltransferase (318 aa).

Cysteine 142 serves as the catalytic Acyl-thioester intermediate. 2 residues coordinate substrate: lysine 163 and serine 192. Histidine 235 serves as the catalytic Proton acceptor. Glutamate 237 is a catalytic residue. Arginine 249 provides a ligand contact to substrate.

The protein belongs to the MetA family.

The protein localises to the cytoplasm. The enzyme catalyses L-homoserine + succinyl-CoA = O-succinyl-L-homoserine + CoA. It participates in amino-acid biosynthesis; L-methionine biosynthesis via de novo pathway; O-succinyl-L-homoserine from L-homoserine: step 1/1. In terms of biological role, transfers a succinyl group from succinyl-CoA to L-homoserine, forming succinyl-L-homoserine. The protein is Homoserine O-succinyltransferase of Shewanella putrefaciens (strain CN-32 / ATCC BAA-453).